The chain runs to 197 residues: Probable GTP-binding protein EngB (197 aa).

The EngB-type G domain maps to 26-197; the sequence is DLPEIALAGR…TSWDAILESL (172 aa). GTP is bound by residues 34 to 41, 61 to 65, 79 to 82, 146 to 149, and 178 to 180; these read GRSNVGKS, GKTQS, DVPG, TKAD, and FSS. 2 residues coordinate Mg(2+): S41 and T63.

This sequence belongs to the TRAFAC class TrmE-Era-EngA-EngB-Septin-like GTPase superfamily. EngB GTPase family. Mg(2+) is required as a cofactor.

Functionally, necessary for normal cell division and for the maintenance of normal septation. The protein is Probable GTP-binding protein EngB of Streptococcus mutans serotype c (strain ATCC 700610 / UA159).